The chain runs to 338 residues: Heat-inducible transcription repressor HrcA (338 aa).

The protein belongs to the HrcA family.

In terms of biological role, negative regulator of class I heat shock genes (grpE-dnaK-dnaJ and groELS operons). Prevents heat-shock induction of these operons. The polypeptide is Heat-inducible transcription repressor HrcA (Bacillus cereus (strain AH820)).